The following is a 422-amino-acid chain: UPF0761 membrane protein Paes_1471 (422 aa).

A run of 6 helical transmembrane segments spans residues 47-67 (LLSI…SPVF), 103-123 (SVPT…ISTI), 143-163 (FTLY…SLVA), 185-205 (LLLL…ILVP), 208-228 (KVKF…FEFS), and 247-267 (GALS…VVAL).

Belongs to the UPF0761 family.

The protein resides in the cell inner membrane. The protein is UPF0761 membrane protein Paes_1471 of Prosthecochloris aestuarii (strain DSM 271 / SK 413).